The sequence spans 336 residues: Protein-glutamate methylesterase/protein-glutamine glutaminase 1 (336 aa).

Residues 2–119 (KIAIVNDMPM…GNAQEAAAPL (118 aa)) form the Response regulatory domain. Aspartate 53 carries the 4-aspartylphosphate modification. One can recognise a CheB-type methylesterase domain in the interval 143 to 336 (PLRSGAPRQS…APRLLEIFAK (194 aa)). Active-site residues include serine 159, histidine 186, and aspartate 279.

Belongs to the CheB family. Phosphorylated by CheA. Phosphorylation of the N-terminal regulatory domain activates the methylesterase activity.

The protein localises to the cytoplasm. The catalysed reaction is [protein]-L-glutamate 5-O-methyl ester + H2O = L-glutamyl-[protein] + methanol + H(+). It catalyses the reaction L-glutaminyl-[protein] + H2O = L-glutamyl-[protein] + NH4(+). Functionally, involved in chemotaxis. Part of a chemotaxis signal transduction system that modulates chemotaxis in response to various stimuli. Catalyzes the demethylation of specific methylglutamate residues introduced into the chemoreceptors (methyl-accepting chemotaxis proteins or MCP) by CheR. Also mediates the irreversible deamidation of specific glutamine residues to glutamic acid. The polypeptide is Protein-glutamate methylesterase/protein-glutamine glutaminase 1 (Pseudomonas fluorescens (strain ATCC BAA-477 / NRRL B-23932 / Pf-5)).